The following is a 391-amino-acid chain: Elongation factor Tu (391 aa).

Positions 10–201 (KPHVNIGTIG…AVDEYIPTPA (192 aa)) constitute a tr-type G domain. The interval 19 to 26 (GHVDHGKT) is G1. 19 to 26 (GHVDHGKT) lines the GTP pocket. T26 contacts Mg(2+). The interval 55-59 (GITIS) is G2. A G3 region spans residues 76–79 (DCPG). GTP is bound by residues 76–80 (DCPGH) and 131–134 (NKVD). Residues 131–134 (NKVD) are G4. Positions 169-171 (SAL) are G5.

The protein belongs to the TRAFAC class translation factor GTPase superfamily. Classic translation factor GTPase family. EF-Tu/EF-1A subfamily. In terms of assembly, monomer.

The protein localises to the cytoplasm. The catalysed reaction is GTP + H2O = GDP + phosphate + H(+). Functionally, GTP hydrolase that promotes the GTP-dependent binding of aminoacyl-tRNA to the A-site of ribosomes during protein biosynthesis. This chain is Elongation factor Tu, found in Cereibacter sphaeroides (strain ATCC 17029 / ATH 2.4.9) (Rhodobacter sphaeroides).